A 143-amino-acid polypeptide reads, in one-letter code: Large ribosomal subunit protein uL15 (143 aa).

The disordered stretch occupies residues 1-54 (MELNSIKPAEGAKHAKRRVGRGIGSGLGKTAGRGHKGQKSRSGGYHKVGFEGGQ). Residues 21-31 (RGIGSGLGKTA) are compositionally biased toward gly residues.

It belongs to the universal ribosomal protein uL15 family. Part of the 50S ribosomal subunit.

Its function is as follows. Binds to the 23S rRNA. This chain is Large ribosomal subunit protein uL15, found in Paracidovorax citrulli (strain AAC00-1) (Acidovorax citrulli).